The primary structure comprises 504 residues: Protein FMP42 (504 aa).

Residues 1–11 lie on the Vacuolar side of the membrane; the sequence is MTSTRTLRYAQ. A helical transmembrane segment spans residues 12 to 32; the sequence is VACACIWCLFSAGIIFGFAAL. At 33-64 the chain is on the cytoplasmic side; that stretch reads KPILISEGVYHELCDPKDGDRLLCTAQDLKLN. The chain crosses the membrane as a helical span at residues 65-85; sequence FIFALSATVTNIMALPVGKIL. The Vacuolar segment spans residues 86-91; it reads DMYGPR. A helical transmembrane segment spans residues 92–112; it reads VCGIIGSCLLFLASGNFISAK. The Cytoplasmic segment spans residues 113-119; that stretch reads HLVSLWD. Residues 120–140 traverse the membrane as a helical segment; the sequence is PYLVGYTLLAVAGPFVFISCF. Topologically, residues 141-150 are vacuolar; that stretch reads QLANSFPQRS. Residues 151-171 traverse the membrane as a helical segment; that stretch reads GTVLALLTGSFDSSSALFLLY. At 172–186 the chain is on the cytoplasmic side; the sequence is RLLYQNWFPTLNVSR. Residues 187–207 traverse the membrane as a helical segment; it reads FFTLYLIVPVFILACQLTIMP. Topologically, residues 208–302 are vacuolar; it reads HSSYKTVNHI…KSAYEQIKSP (95 aa). Residues S238, S249, and S269 each carry the phosphoserine modification. A helical transmembrane segment spans residues 303–323; it reads WFYLMLLFALVAMLRINYFIA. Residues 324 to 344 lie on the Cytoplasmic side of the membrane; that stretch reads TVRTQEEYLLNDPDLALKLNS. A helical membrane pass occupies residues 345–365; it reads IFDMLLPLGGAVSIPFIGLLL. Topologically, residues 366–385 are vacuolar; sequence DHTDTLSTLTILFTTSTAIG. The helical transmembrane segment at 386-406 threads the bilayer; sequence VFGLIPNSFTWNLIGIVLLVV. Topologically, residues 407 to 421 are cytoplasmic; it reads YRPFYYTVVSDYSSK. A helical membrane pass occupies residues 422–442; it reads VFGFDTFGTVYGLLSCICGIF. Residues 443–462 are Vacuolar-facing; the sequence is NMSQNLLDKWTHTTFNMNPF. Residues 463–483 traverse the membrane as a helical segment; the sequence is PINLTLVILTVVFSLTLTFYI. Residues 484-504 lie on the Cytoplasmic side of the membrane; the sequence is RSQILPKPVNERGLSSNYQTI.

The protein belongs to the SLC43A transporter (TC 2.A.1.44) family.

Its subcellular location is the vacuole membrane. In Saccharomyces cerevisiae (strain ATCC 204508 / S288c) (Baker's yeast), this protein is Protein FMP42 (FMP42).